Consider the following 41-residue polypeptide: Large ribosomal subunit protein bL36 (41 aa).

Belongs to the bacterial ribosomal protein bL36 family.

This is Large ribosomal subunit protein bL36 from Chelativorans sp. (strain BNC1).